A 206-amino-acid chain; its full sequence is Large ribosomal subunit protein mL40 (206 aa).

A mitochondrion-targeting transit peptide spans M1–R46. The disordered stretch occupies residues P170–E189.

This sequence belongs to the mitochondrion-specific ribosomal protein mL40 family. Component of the mitochondrial ribosome large subunit (39S) which comprises a 16S rRNA and about 50 distinct proteins. In terms of tissue distribution, ubiquitous.

It is found in the mitochondrion. This chain is Large ribosomal subunit protein mL40 (Mrpl40), found in Mus musculus (Mouse).